We begin with the raw amino-acid sequence, 480 residues long: Protein nucleotidyltransferase YdiU (480 aa).

ATP contacts are provided by G86, G88, R89, K109, D121, G122, R172, and R179. D248 functions as the Proton acceptor in the catalytic mechanism. 2 residues coordinate Mg(2+): N249 and D258. ATP is bound at residue D258.

Belongs to the SELO family. Requires Mg(2+) as cofactor. Mn(2+) is required as a cofactor.

It catalyses the reaction L-seryl-[protein] + ATP = 3-O-(5'-adenylyl)-L-seryl-[protein] + diphosphate. The catalysed reaction is L-threonyl-[protein] + ATP = 3-O-(5'-adenylyl)-L-threonyl-[protein] + diphosphate. The enzyme catalyses L-tyrosyl-[protein] + ATP = O-(5'-adenylyl)-L-tyrosyl-[protein] + diphosphate. It carries out the reaction L-histidyl-[protein] + UTP = N(tele)-(5'-uridylyl)-L-histidyl-[protein] + diphosphate. It catalyses the reaction L-seryl-[protein] + UTP = O-(5'-uridylyl)-L-seryl-[protein] + diphosphate. The catalysed reaction is L-tyrosyl-[protein] + UTP = O-(5'-uridylyl)-L-tyrosyl-[protein] + diphosphate. Nucleotidyltransferase involved in the post-translational modification of proteins. It can catalyze the addition of adenosine monophosphate (AMP) or uridine monophosphate (UMP) to a protein, resulting in modifications known as AMPylation and UMPylation. This is Protein nucleotidyltransferase YdiU from Salmonella typhi.